The sequence spans 83 residues: Antitoxin ChpS (83 aa).

The SpoVT-AbrB domain maps to isoleucine 3–arginine 48.

It belongs to the PemI family. As to quaternary structure, interacts with ChpB, inhibiting its endoribonuclease activity.

Functionally, antitoxin component of a type II toxin-antitoxin (TA) system. May be involved in the regulation of cell growth. It acts as a suppressor of the endoribonuclease (inhibitory function) of ChpB protein. Both ChpS and ChpB probably bind to the promoter region of the chpS-chpB operon to autoregulate their synthesis. This Escherichia coli (strain K12) protein is Antitoxin ChpS (chpS).